Reading from the N-terminus, the 186-residue chain is Protein MTH_152 (186 aa).

This sequence belongs to the flavoredoxin family. Homodimer. The cofactor is FMN.

The polypeptide is Protein MTH_152 (Methanothermobacter thermautotrophicus (strain ATCC 29096 / DSM 1053 / JCM 10044 / NBRC 100330 / Delta H) (Methanobacterium thermoautotrophicum)).